Consider the following 147-residue polypeptide: MVHLTAEEKAAVTALWGKVDVEDVGGEALGRLLVVYPWTQRFFDSFGDLSTPAAVMSNAKVKAHGKKVLNAFSDGMAHLDNLKGTFAKLSELHCDKLHVDPENFRLLGNVLVCVLAHHFGKEFTPQVQAAYQKVVAGVATALAHKYH.

Valine 2 is subject to N-acetylvaline. In terms of domain architecture, Globin spans 3 to 147 (HLTAEEKAAV…VATALAHKYH (145 aa)). At threonine 13 the chain carries Phosphothreonine. Position 45 is a phosphoserine (serine 45). The residue at position 60 (lysine 60) is an N6-acetyllysine. Residue histidine 64 participates in heme b binding. At lysine 83 the chain carries N6-acetyllysine. Histidine 93 serves as a coordination point for heme b. Cysteine 94 bears the S-nitrosocysteine mark. Lysine 145 is subject to N6-acetyllysine.

The protein belongs to the globin family. In terms of assembly, heterotetramer of two alpha chains and two beta chains. In terms of tissue distribution, red blood cells.

Its function is as follows. Involved in oxygen transport from the lung to the various peripheral tissues. The chain is Hemoglobin subunit beta (HBB) from Carlito syrichta (Philippine tarsier).